A 470-amino-acid polypeptide reads, in one-letter code: Fumarate reductase 1 (470 aa).

6–20 (VVVIGTGLAGLAAAN) lines the FAD pocket. Ser66 bears the Phosphoserine mark. Active-site residues include His249 and Arg272.

It belongs to the FAD-dependent oxidoreductase 2 family. FRD/SDH subfamily. It depends on FAD as a cofactor. Post-translationally, the N-terminus is blocked.

Its subcellular location is the cytoplasm. It carries out the reaction succinate + NAD(+) = fumarate + NADH + H(+). Functionally, irreversibly catalyzes the reduction of fumarate to succinate. Together with the second isozyme of soluble fumarate reductase (OSM1), essential for anaerobic growth. Involved in maintaining redox balance. Reduction of fumarate is the main source of succinate during fermentation, and under anaerobic conditions, the formation of succinate is strictly required for the reoxidation of FADH(2). The chain is Fumarate reductase 1 (FRD1) from Saccharomyces cerevisiae (strain ATCC 204508 / S288c) (Baker's yeast).